Consider the following 374-residue polypeptide: Eukaryotic translation initiation factor 3 subunit M (374 aa).

Ser-2 is modified (N-acetylserine). Phosphoserine occurs at positions 2 and 152. In terms of domain architecture, PCI spans 180-339 (AASKVMVELL…RKVVVSHSTH (160 aa)). Lys-254 carries the post-translational modification N6-acetyllysine. Ser-367 is subject to Phosphoserine.

It belongs to the eIF-3 subunit M family. Component of the eukaryotic translation initiation factor 3 (eIF-3) complex, which is composed of 13 subunits: EIF3A, EIF3B, EIF3C, EIF3D, EIF3E, EIF3F, EIF3G, EIF3H, EIF3I, EIF3J, EIF3K, EIF3L and EIF3M. The eIF-3 complex appears to include 3 stable modules: module A is composed of EIF3A, EIF3B, EIF3G and EIF3I; module B is composed of EIF3F, EIF3H, and EIF3M; and module C is composed of EIF3C, EIF3D, EIF3E, EIF3K and EIF3L. EIF3C of module C binds EIF3B of module A and EIF3H of module B, thereby linking the three modules. EIF3J is a labile subunit that binds to the eIF-3 complex via EIF3B. The eIF-3 complex interacts with RPS6KB1 under conditions of nutrient depletion. Mitogenic stimulation leads to binding and activation of a complex composed of MTOR and RPTOR, leading to phosphorylation and release of RPS6KB1 and binding of EIF4B to eIF-3.

The protein resides in the cytoplasm. Component of the eukaryotic translation initiation factor 3 (eIF-3) complex, which is required for several steps in the initiation of protein synthesis. The eIF-3 complex associates with the 40S ribosome and facilitates the recruitment of eIF-1, eIF-1A, eIF-2:GTP:methionyl-tRNAi and eIF-5 to form the 43S pre-initiation complex (43S PIC). The eIF-3 complex stimulates mRNA recruitment to the 43S PIC and scanning of the mRNA for AUG recognition. The eIF-3 complex is also required for disassembly and recycling of post-termination ribosomal complexes and subsequently prevents premature joining of the 40S and 60S ribosomal subunits prior to initiation. The eIF-3 complex specifically targets and initiates translation of a subset of mRNAs involved in cell proliferation, including cell cycling, differentiation and apoptosis, and uses different modes of RNA stem-loop binding to exert either translational activation or repression. In Mus musculus (Mouse), this protein is Eukaryotic translation initiation factor 3 subunit M (Eif3m).